Reading from the N-terminus, the 774-residue chain is MHHNNHHHGHHGRYQHHHNQHLKRPLKGGTEDDDILEITPIGSGSEVGRSCVLLKYKGKKVMFDCGVHPAYSGLVSLPFFDSIESDIPDIDLLLVSHFHLDHAAAVPYFVGKTKFKGRVFMTHPTKAIYGMLLSDYVKVSNITRDDDMLFDKSDLDRSLEKIEKVRYRQKVEHNGIKVTCFNAGHVLGAAMFMIEIAGVKILYTGDFSRQEDRHLMGAETPPVKVDVLIIESTYGVQVHEPRLEREKRFTSSVHQVVERNGKCLIPVFALGRAQELLLILDEYWIANPQLHHVPIYYASALAKKCMGVYRTYINMMNDRVRAQFDVSNPFEFKHIKNIKGIESFDDRGPCVFMASPGMLQSGLSRQLFERWCSDKRNGIVIPGYSVEGTLAKHIMSEPAEITRLDNVNVPLNLTVSYVSFSAHSDFLQTSEFIQEIQPPHVVLVHGDANEMSRLRQSLVAKFKTINVLTPKNAMSVALEFRPEKVAKTLGSIITNPPKQNDIIQGILVTKDFTHHILSASDIHNYTNLKTNIIKQKLTLPFAQTYHILISTLEQIYEQIIESTESTGGGGNEKPTITIYNEIKLIYNIGVSIILEWNSNTVNDMICDSIIALISQIELNPLSIKVRNPNFNNIDEKEEITKDDIEKEKEKEKEQQDGDDDDDDEIQIKVVSRKSRKLSNKLNTITEVKLLLEQQYGNFKVDENDPLILHFNLDNQKAIIHLETLTVESLDQILKQKIENSIKRIILSVSPIGNNLNQINNQDNENNIKMETDFK.

A compositionally biased stretch (basic residues) spans 1–26 (MHHNNHHHGHHGRYQHHHNQHLKRPL). A disordered region spans residues 1–30 (MHHNNHHHGHHGRYQHHHNQHLKRPLKGGT). Histidine 97, histidine 99, aspartate 101, histidine 102, histidine 185, and aspartate 206 together coordinate Zn(2+). The Proton donor role is filled by histidine 423. Position 445 (histidine 445) interacts with Zn(2+). Residues 636–665 (KEEITKDDIEKEKEKEKEQQDGDDDDDDEI) are disordered. Basic and acidic residues predominate over residues 638–655 (EITKDDIEKEKEKEKEQQ).

Belongs to the metallo-beta-lactamase superfamily. RNA-metabolizing metallo-beta-lactamase-like family. CPSF3 subfamily. Component of the cleavage and polyadenylation specificity factor (CPSF) complex. Requires Zn(2+) as cofactor.

The protein localises to the nucleus. Functionally, component of the cleavage and polyadenylation specificity factor (CPSF) complex that play a key role in pre-mRNA 3'-end formation, recognizing the AAUAAA signal sequence and interacting with poly(A) polymerase and other factors to bring about cleavage and poly(A) addition. Has endonuclease activity, and functions as an mRNA 3'-end-processing endonuclease. In Dictyostelium discoideum (Social amoeba), this protein is Cleavage and polyadenylation specificity factor subunit 3 (cpsf3).